A 240-amino-acid chain; its full sequence is MIAFIVLPILAAVLHQSSGNVDFDSESPRKPEIQNEIIDLHNSLRRSVNPTASNMLKMEWYPEAAANAERWAYRCIESHSSRDSRVIGGIKCGENIYMSPYPAKWTDIIHAWHGEYKDFKYGVGAVPSNAATGHYTQIVWYKSYRGGCAAAYCPSSKYRYFYVCQYCPAGNMIGKTATPYTSGPPCGDCPSDCDNGLCTNPCTQENTYSNCNSLVQQSSCQDNNMKTKCPASCFCQNKII.

The first 19 residues, 1–19 (MIAFIVLPILAAVLHQSSG), serve as a signal peptide directing secretion. In terms of domain architecture, SCP spans 39–166 (DLHNSLRRSV…KYRYFYVCQY (128 aa)). 8 disulfide bridges follow: Cys-75/Cys-153, Cys-92/Cys-167, Cys-148/Cys-164, Cys-186/Cys-193, Cys-189/Cys-198, Cys-202/Cys-235, Cys-211/Cys-229, and Cys-220/Cys-233. One can recognise a ShKT domain in the interval 202-235 (CTQENTYSNCNSLVQQSSCQDNNMKTKCPASCFC).

This sequence belongs to the CRISP family. As to expression, expressed by the venom gland.

It localises to the secreted. Functionally, may block ryanodine receptors (RYR). The sequence is that of Cysteine-rich venom protein from Protobothrops mucrosquamatus (Taiwan habu).